Reading from the N-terminus, the 147-residue chain is D-aminoacyl-tRNA deacylase (147 aa).

The Gly-cisPro motif, important for rejection of L-amino acids motif lies at 137-138 (GP).

This sequence belongs to the DTD family. As to quaternary structure, homodimer.

It is found in the cytoplasm. The catalysed reaction is glycyl-tRNA(Ala) + H2O = tRNA(Ala) + glycine + H(+). It catalyses the reaction a D-aminoacyl-tRNA + H2O = a tRNA + a D-alpha-amino acid + H(+). Its function is as follows. An aminoacyl-tRNA editing enzyme that deacylates mischarged D-aminoacyl-tRNAs. Also deacylates mischarged glycyl-tRNA(Ala), protecting cells against glycine mischarging by AlaRS. Acts via tRNA-based rather than protein-based catalysis; rejects L-amino acids rather than detecting D-amino acids in the active site. By recycling D-aminoacyl-tRNA to D-amino acids and free tRNA molecules, this enzyme counteracts the toxicity associated with the formation of D-aminoacyl-tRNA entities in vivo and helps enforce protein L-homochirality. This chain is D-aminoacyl-tRNA deacylase, found in Levilactobacillus brevis (strain ATCC 367 / BCRC 12310 / CIP 105137 / JCM 1170 / LMG 11437 / NCIMB 947 / NCTC 947) (Lactobacillus brevis).